The primary structure comprises 91 residues: Small ribosomal subunit protein bS20 (91 aa).

Residues 1-26 (MANLKSSKKDIRRTARRKERNGEDRT) form a disordered region.

The protein belongs to the bacterial ribosomal protein bS20 family.

Its function is as follows. Binds directly to 16S ribosomal RNA. This chain is Small ribosomal subunit protein bS20, found in Leptospira biflexa serovar Patoc (strain Patoc 1 / Ames).